Here is a 698-residue protein sequence, read N- to C-terminus: Methionine--tRNA ligase (698 aa).

A 'HIGH' region motif is present at residues 18–28; sequence PYANGDLHVGH. Residues Cys149, Cys152, Cys161, and Cys165 each coordinate Zn(2+). ATP is bound at residue Thr350. Residues 567–590 form a disordered region; sequence EAADAGDEEGEDEDEEPPAADLEP. A compositionally biased stretch (acidic residues) spans 570–584; that stretch reads DAGDEEGEDEDEEPP. In terms of domain architecture, tRNA-binding spans 600–698; it reads DFQDLDIRVA…EDAEPGTKVQ (99 aa).

This sequence belongs to the class-I aminoacyl-tRNA synthetase family. MetG type 1 subfamily. Homodimer. It depends on Zn(2+) as a cofactor.

The protein resides in the cytoplasm. It carries out the reaction tRNA(Met) + L-methionine + ATP = L-methionyl-tRNA(Met) + AMP + diphosphate. In terms of biological role, is required not only for elongation of protein synthesis but also for the initiation of all mRNA translation through initiator tRNA(fMet) aminoacylation. The sequence is that of Methionine--tRNA ligase from Natronomonas pharaonis (strain ATCC 35678 / DSM 2160 / CIP 103997 / JCM 8858 / NBRC 14720 / NCIMB 2260 / Gabara) (Halobacterium pharaonis).